A 169-amino-acid polypeptide reads, in one-letter code: MVQLQNFFFFLIFLVVLCGTAAPILFQWLVSRDVSTGAPFFNGTIIPIFTSLLLVLVYIHSRGFMRSLDEAKRIVLIRARPILLPNIIEKSSPKKIQYISFFLDEKALSIFSFFRQFFFSFFVRQFPALCFVGQYFGFVVSHKTKSGTLSDSARALGPCCCFFILLLSN.

The protein localises to the mitochondrion. This is an uncharacterized protein from Marchantia polymorpha (Common liverwort).